A 218-amino-acid chain; its full sequence is Thiopurine S-methyltransferase (218 aa).

Residues Trp10, Leu45, Glu66, and Arg123 each contribute to the S-adenosyl-L-methionine site.

This sequence belongs to the class I-like SAM-binding methyltransferase superfamily. TPMT family.

It is found in the cytoplasm. The enzyme catalyses S-adenosyl-L-methionine + a thiopurine = S-adenosyl-L-homocysteine + a thiopurine S-methylether.. The sequence is that of Thiopurine S-methyltransferase from Xanthomonas euvesicatoria pv. vesicatoria (strain 85-10) (Xanthomonas campestris pv. vesicatoria).